The primary structure comprises 375 residues: tRNA-specific 2-thiouridylase MnmA (375 aa).

ATP is bound by residues 9 to 16 (AMSGGVDS) and Leu-35. The Nucleophile role is filled by Cys-105. A disulfide bridge links Cys-105 with Cys-201. ATP is bound at residue Gly-129. The interaction with tRNA stretch occupies residues 151–153 (KNQ). The active-site Cysteine persulfide intermediate is Cys-201. The interval 307-308 (RY) is interaction with tRNA.

It belongs to the MnmA/TRMU family.

The protein resides in the cytoplasm. The enzyme catalyses S-sulfanyl-L-cysteinyl-[protein] + uridine(34) in tRNA + AH2 + ATP = 2-thiouridine(34) in tRNA + L-cysteinyl-[protein] + A + AMP + diphosphate + H(+). Its function is as follows. Catalyzes the 2-thiolation of uridine at the wobble position (U34) of tRNA, leading to the formation of s(2)U34. The chain is tRNA-specific 2-thiouridylase MnmA from Leptospira interrogans serogroup Icterohaemorrhagiae serovar copenhageni (strain Fiocruz L1-130).